We begin with the raw amino-acid sequence, 341 residues long: Glycerol-3-phosphate dehydrogenase [NAD(P)+] 1 (341 aa).

NADPH contacts are provided by Ser-11, Trp-12, Arg-32, Arg-33, and Lys-106. Residues Lys-106, Gly-137, and Ser-139 each contribute to the sn-glycerol 3-phosphate site. Ala-141 lines the NADPH pocket. Sn-glycerol 3-phosphate contacts are provided by Lys-192, Asp-245, Ser-255, Arg-256, and Asn-257. The Proton acceptor role is filled by Lys-192. An NADPH-binding site is contributed by Arg-256. Residues Val-280 and Glu-282 each coordinate NADPH.

Belongs to the NAD-dependent glycerol-3-phosphate dehydrogenase family.

It localises to the cytoplasm. It catalyses the reaction sn-glycerol 3-phosphate + NAD(+) = dihydroxyacetone phosphate + NADH + H(+). The enzyme catalyses sn-glycerol 3-phosphate + NADP(+) = dihydroxyacetone phosphate + NADPH + H(+). It participates in membrane lipid metabolism; glycerophospholipid metabolism. In terms of biological role, catalyzes the reduction of the glycolytic intermediate dihydroxyacetone phosphate (DHAP) to sn-glycerol 3-phosphate (G3P), the key precursor for phospholipid synthesis. In Salinibacter ruber (strain DSM 13855 / M31), this protein is Glycerol-3-phosphate dehydrogenase [NAD(P)+] 1.